Reading from the N-terminus, the 244-residue chain is 1-(5-phosphoribosyl)-5-[(5-phosphoribosylamino)methylideneamino] imidazole-4-carboxamide isomerase (244 aa).

The active-site Proton acceptor is the D8. The Proton donor role is filled by D129.

Belongs to the HisA/HisF family.

The protein resides in the cytoplasm. It carries out the reaction 1-(5-phospho-beta-D-ribosyl)-5-[(5-phospho-beta-D-ribosylamino)methylideneamino]imidazole-4-carboxamide = 5-[(5-phospho-1-deoxy-D-ribulos-1-ylimino)methylamino]-1-(5-phospho-beta-D-ribosyl)imidazole-4-carboxamide. Its pathway is amino-acid biosynthesis; L-histidine biosynthesis; L-histidine from 5-phospho-alpha-D-ribose 1-diphosphate: step 4/9. This is 1-(5-phosphoribosyl)-5-[(5-phosphoribosylamino)methylideneamino] imidazole-4-carboxamide isomerase from Allorhizobium ampelinum (strain ATCC BAA-846 / DSM 112012 / S4) (Agrobacterium vitis (strain S4)).